The following is a 498-amino-acid chain: ADP,ATP carrier protein 1 (498 aa).

The Cytoplasmic portion of the chain corresponds to 1–33; sequence MSTTKSDNYISELRKVIWPIERYENKKFLPMAF. Residues 34–54 form a helical membrane-spanning segment; that stretch reads MMFCILLNYSTLRSIKDGFVV. The cysteines at positions 37 and 85 are disulfide-linked. At 55–67 the chain is on the extracellular side; that stretch reads TDIGAEAISFLKT. A helical membrane pass occupies residues 68-88; the sequence is YIVLPSAVIAMIVYVKLCDIL. At 89 to 92 the chain is on the cytoplasmic side; sequence KQEN. A helical membrane pass occupies residues 93-113; the sequence is VFYVITSFFLAYFALFAFVLY. Residues 114 to 147 are Extracellular-facing; it reads PNPDLVHPNPEAIESLSLAYPNFKWFIRIVGKWS. Residues 148-168 traverse the membrane as a helical segment; sequence FASFYTMAELWGTLMLSLLFW. At 169–184 the chain is on the cytoplasmic side; it reads QFANQITKTDEAKRFY. The chain crosses the membrane as a helical span at residues 185–205; it reads SMFGLLANLALPVTSLIIGYF. Over 206–218 the chain is Extracellular; the sequence is LHEKTQIVAEHLK. Residues 219-239 form a helical membrane-spanning segment; sequence FTPLFVIMIISSLAVILTYRW. The Cytoplasmic portion of the chain corresponds to 240-279; sequence MNKNVLTDPKLYDPALVKGKKAKAKMSLIESFKMIFTSKY. The chain crosses the membrane as a helical span at residues 280–300; it reads VGYIALLLIAYGISVNLVEGV. At 301–320 the chain is on the extracellular side; that stretch reads WKSKLKELHPTKEAYTMYMG. The helical transmembrane segment at 321-341 threads the bilayer; the sequence is QFQAYQGWVAIAFMIIGSNIL. The Cytoplasmic portion of the chain corresponds to 342–348; the sequence is RKVSWLT. A helical transmembrane segment spans residues 349–369; the sequence is AAMITPLMMLITGIAFFAFIF. The Extracellular portion of the chain corresponds to 370–379; the sequence is FDSVIAMYLT. The chain crosses the membrane as a helical span at residues 380 to 400; the sequence is GILASGPLALAVMIGTIQNVL. The Cytoplasmic segment spans residues 401 to 438; the sequence is SKGVKYSLFDATKNMAYIPLDKDLRVKGQAAVEVIGGR. 436 to 442 provides a ligand contact to ATP; sequence GGRFGKS. Residues 439–459 traverse the membrane as a helical segment; that stretch reads FGKSGGAIIQSTFFIIFPALG. The Extracellular portion of the chain corresponds to 460–465; the sequence is FVEATP. The chain crosses the membrane as a helical span at residues 466–486; the sequence is YFASIFFVIVILWIYAVKGLN. Over 487-498 the chain is Cytoplasmic; the sequence is KEYQVLVNNTEK.

The protein belongs to the ADP/ATP translocase tlc family.

The protein resides in the cell membrane. In terms of biological role, provides the rickettsial cell with host ATP in exchange for rickettsial ADP. This is an obligate exchange system. This energy acquiring activity is an important component of rickettsial parasitism. The sequence is that of ADP,ATP carrier protein 1 (tlcA) from Rickettsia bellii (strain RML369-C).